We begin with the raw amino-acid sequence, 391 residues long: 3-demethoxyubiquinol 3-hydroxylase (391 aa).

The protein belongs to the UbiH/COQ6 family. Component of the Ubi complex metabolon, which regroups five ubiquinone biosynthesis proteins (UbiE, UbiF, UbiG, UbiH and UbiI) and two accessory factors (UbiK and the lipid-binding protein UbiJ). FAD serves as cofactor.

The protein resides in the cytoplasm. It catalyses the reaction a 5-methoxy-2-methyl-3-(all-trans-polyprenyl)benzene-1,4-diol + AH2 + O2 = a 3-demethylubiquinol + A + H2O. It participates in cofactor biosynthesis; ubiquinone biosynthesis. Functionally, catalyzes the hydroxylation of 2-octaprenyl-3-methyl-6-methoxy-1,4-benzoquinol during ubiquinone biosynthesis. The sequence is that of 3-demethoxyubiquinol 3-hydroxylase (ubiF) from Escherichia coli (strain K12).